A 217-amino-acid chain; its full sequence is Phosphoenolpyruvate guanylyltransferase (217 aa).

Phosphoenolpyruvate is bound by residues Thr150, Gly165, and Ser168.

The protein belongs to the CofC family.

The catalysed reaction is phosphoenolpyruvate + GTP + H(+) = enolpyruvoyl-2-diphospho-5'-guanosine + diphosphate. Its pathway is cofactor biosynthesis; coenzyme F420 biosynthesis. In terms of biological role, guanylyltransferase that catalyzes the activation of phosphoenolpyruvate (PEP) as enolpyruvoyl-2-diphospho-5'-guanosine, via the condensation of PEP with GTP. It is involved in the biosynthesis of coenzyme F420, a hydride carrier cofactor. This is Phosphoenolpyruvate guanylyltransferase from Mycobacterium ulcerans (strain Agy99).